Here is a 322-residue protein sequence, read N- to C-terminus: Phospho-N-acetylmuramoyl-pentapeptide-transferase (322 aa).

Transmembrane regions (helical) follow at residues isoleucine 9–methionine 29, threonine 54–tryptophan 74, valine 82–isoleucine 102, isoleucine 122–tyrosine 142, phenylalanine 145–glycine 165, leucine 176–phenylalanine 196, asparagine 200–phenylalanine 220, isoleucine 227–methionine 247, leucine 255–phenylalanine 275, and valine 302–glycine 322.

The protein belongs to the glycosyltransferase 4 family. MraY subfamily. The cofactor is Mg(2+).

It is found in the cell membrane. The enzyme catalyses UDP-N-acetyl-alpha-D-muramoyl-L-alanyl-gamma-D-glutamyl-L-lysyl-D-alanyl-D-alanine + di-trans,octa-cis-undecaprenyl phosphate = Mur2Ac(oyl-L-Ala-gamma-D-Glu-L-Lys-D-Ala-D-Ala)-di-trans,octa-cis-undecaprenyl diphosphate + UMP. Its pathway is cell wall biogenesis; peptidoglycan biosynthesis. Catalyzes the initial step of the lipid cycle reactions in the biosynthesis of the cell wall peptidoglycan: transfers peptidoglycan precursor phospho-MurNAc-pentapeptide from UDP-MurNAc-pentapeptide onto the lipid carrier undecaprenyl phosphate, yielding undecaprenyl-pyrophosphoryl-MurNAc-pentapeptide, known as lipid I. This chain is Phospho-N-acetylmuramoyl-pentapeptide-transferase, found in Lactobacillus acidophilus (strain ATCC 700396 / NCK56 / N2 / NCFM).